A 570-amino-acid chain; its full sequence is Methionine--tRNA ligase (570 aa).

A 'HIGH' region motif is present at residues 11–21 (PYVQTVPHLGN). Zn(2+) contacts are provided by Cys143, Cys146, Cys156, and Cys159. The 'KMSKS' region signature appears at 333-337 (KFSKS). ATP is bound at residue Lys336.

This sequence belongs to the class-I aminoacyl-tRNA synthetase family. MetG type 1 subfamily. Zn(2+) is required as a cofactor.

The protein localises to the cytoplasm. The enzyme catalyses tRNA(Met) + L-methionine + ATP = L-methionyl-tRNA(Met) + AMP + diphosphate. Its function is as follows. Is required not only for elongation of protein synthesis but also for the initiation of all mRNA translation through initiator tRNA(fMet) aminoacylation. The chain is Methionine--tRNA ligase from Pyrobaculum aerophilum (strain ATCC 51768 / DSM 7523 / JCM 9630 / CIP 104966 / NBRC 100827 / IM2).